A 223-amino-acid chain; its full sequence is Thymidine kinase (223 aa).

ATP contacts are provided by residues 19–26 (GPMFAGKT) and 96–99 (DEVQ). The active-site Proton acceptor is the glutamate 97. Cysteine 153, cysteine 156, cysteine 191, and histidine 194 together coordinate Zn(2+).

Belongs to the thymidine kinase family. As to quaternary structure, homotetramer.

Its subcellular location is the cytoplasm. It catalyses the reaction thymidine + ATP = dTMP + ADP + H(+). This Ureaplasma urealyticum serovar 10 (strain ATCC 33699 / Western) protein is Thymidine kinase.